The primary structure comprises 138 residues: Small ribosomal subunit protein uS12 (138 aa).

The segment at 33–55 (KEHTNVSSPQKRGVCTRVGTMTP) is disordered. Aspartate 102 carries the 3-methylthioaspartic acid modification.

This sequence belongs to the universal ribosomal protein uS12 family. As to quaternary structure, part of the 30S ribosomal subunit. Contacts proteins S8 and S17. May interact with IF1 in the 30S initiation complex.

In terms of biological role, with S4 and S5 plays an important role in translational accuracy. Functionally, interacts with and stabilizes bases of the 16S rRNA that are involved in tRNA selection in the A site and with the mRNA backbone. Located at the interface of the 30S and 50S subunits, it traverses the body of the 30S subunit contacting proteins on the other side and probably holding the rRNA structure together. The combined cluster of proteins S8, S12 and S17 appears to hold together the shoulder and platform of the 30S subunit. This Bacillus velezensis (strain DSM 23117 / BGSC 10A6 / LMG 26770 / FZB42) (Bacillus amyloliquefaciens subsp. plantarum) protein is Small ribosomal subunit protein uS12.